Here is a 236-residue protein sequence, read N- to C-terminus: UPF0502 protein Bamb_4889 (236 aa).

It belongs to the UPF0502 family.

This chain is UPF0502 protein Bamb_4889, found in Burkholderia ambifaria (strain ATCC BAA-244 / DSM 16087 / CCUG 44356 / LMG 19182 / AMMD) (Burkholderia cepacia (strain AMMD)).